The sequence spans 154 residues: Ribonuclease H (154 aa).

Residues 1–142 (MLKQITLYTD…CDELARNAAL (142 aa)) form the RNase H type-1 domain. 4 residues coordinate Mg(2+): aspartate 10, glutamate 48, aspartate 70, and aspartate 134.

This sequence belongs to the RNase H family. In terms of assembly, monomer. Mg(2+) is required as a cofactor.

The protein resides in the cytoplasm. It carries out the reaction Endonucleolytic cleavage to 5'-phosphomonoester.. Its function is as follows. Endonuclease that specifically degrades the RNA of RNA-DNA hybrids. The sequence is that of Ribonuclease H from Tolumonas auensis (strain DSM 9187 / NBRC 110442 / TA 4).